Consider the following 936-residue polypeptide: Phosphoenolpyruvate carboxylase (936 aa).

Residues 1–20 are disordered; it reads MSSLNLSAGPEPVSERPDDA. Residues H164 and K598 contribute to the active site.

The protein belongs to the PEPCase type 1 family. Mg(2+) is required as a cofactor.

It catalyses the reaction oxaloacetate + phosphate = phosphoenolpyruvate + hydrogencarbonate. In terms of biological role, forms oxaloacetate, a four-carbon dicarboxylic acid source for the tricarboxylic acid cycle. This is Phosphoenolpyruvate carboxylase (ppc) from Rhodopseudomonas palustris (strain ATCC BAA-98 / CGA009).